We begin with the raw amino-acid sequence, 212 residues long: Pyrrolidone-carboxylate peptidase (212 aa).

Active-site residues include E78, C141, and H165.

This sequence belongs to the peptidase C15 family. Homotetramer.

The protein localises to the cytoplasm. It catalyses the reaction Release of an N-terminal pyroglutamyl group from a polypeptide, the second amino acid generally not being Pro.. Functionally, removes 5-oxoproline from various penultimate amino acid residues except L-proline. This is Pyrrolidone-carboxylate peptidase from Staphylococcus haemolyticus (strain JCSC1435).